The following is a 594-amino-acid chain: UvrABC system protein C (594 aa).

In terms of domain architecture, GIY-YIG spans 17–94 (LEPGCYLMKD…IKQYQPRYNI (78 aa)). A UVR domain is found at 199–234 (KTILNHLEERMNKASEQLDFEQAKEYRDMIQHIHNL).

It belongs to the UvrC family. As to quaternary structure, interacts with UvrB in an incision complex.

It localises to the cytoplasm. Its function is as follows. The UvrABC repair system catalyzes the recognition and processing of DNA lesions. UvrC both incises the 5' and 3' sides of the lesion. The N-terminal half is responsible for the 3' incision and the C-terminal half is responsible for the 5' incision. The protein is UvrABC system protein C of Staphylococcus epidermidis (strain ATCC 35984 / DSM 28319 / BCRC 17069 / CCUG 31568 / BM 3577 / RP62A).